Here is a 226-residue protein sequence, read N- to C-terminus: Prolactin (226 aa).

Positions 1 to 29 are cleaved as a signal peptide; it reads MNSQGSDRKAVTLLLLVMSNLLFCQNAHP. C33 and C38 are disulfide-bonded. Residues S53 and S117 each carry the phosphoserine modification. 2 disulfides stabilise this stretch: C85–C201 and C218–C226.

Belongs to the somatotropin/prolactin family. Interacts with PRLR.

The protein localises to the secreted. Prolactin acts primarily on the mammary gland by promoting lactation. The polypeptide is Prolactin (PRL) (Mesocricetus auratus (Golden hamster)).